Here is a 341-residue protein sequence, read N- to C-terminus: Eukaryotic translation initiation factor 3 subunit I (341 aa).

5 WD repeats span residues 8–49 (GHER…GTYR), 50–91 (GHQG…KTWD), 135–184 (QSDE…LLYN), 189–228 (ELNQPITDLQWSQDRTYFITASKDKTSKLISSKDLEVLKS), and 286–325 (GHFGPLNTVAADPTGKGYASGGEDGYVRVHAFDKGYYDFL).

It belongs to the eIF-3 subunit I family. Component of the eukaryotic translation initiation factor 3 (eIF-3) complex.

It is found in the cytoplasm. Its function is as follows. Component of the eukaryotic translation initiation factor 3 (eIF-3) complex, which is involved in protein synthesis of a specialized repertoire of mRNAs and, together with other initiation factors, stimulates binding of mRNA and methionyl-tRNAi to the 40S ribosome. The eIF-3 complex specifically targets and initiates translation of a subset of mRNAs involved in cell proliferation. This Chaetomium globosum (strain ATCC 6205 / CBS 148.51 / DSM 1962 / NBRC 6347 / NRRL 1970) (Soil fungus) protein is Eukaryotic translation initiation factor 3 subunit I.